The chain runs to 391 residues: MRLFSIPPPTLLAGFLAVLIGYASSAAIIWQAAIVAGATTAQISGWMTALGLAMGVSTLTLTLWYRVPVLTAWSTPGAALLVTGLQGLTLNEAIGVFIVTNALIVLCGITGLFARLMRIIPHSLAAAMLAGILLRFGLQAFASLDGQFTLCGSMLLVWLATKAVAPRYAVIAAMIIGIVIVIAQGDVVTTDVVFKPVLPTYITPDFSFAHSLSVALPLFLVTMASQNAPGIAAMKAAGYSAPVSPLIVFTGLLALVFSPFGVYSVGIAAITAAICQSPEAHPDKDQRWLAAAVAGIFYLLAGLFGSAITGMMAALPVSWIQMLAGLALLSTIGGSLYQALHNERERDAAVVAFLVTASGLTLVGIGSAFWGLIAGGVCYVVLNLIADRNRY.

Over 1-9 (MRLFSIPPP) the chain is Cytoplasmic. A helical transmembrane segment spans residues 10-30 (TLLAGFLAVLIGYASSAAIIW). The Periplasmic segment spans residues 31–42 (QAAIVAGATTAQ). Residues 43–63 (ISGWMTALGLAMGVSTLTLTL) form a helical membrane-spanning segment. Over 64 to 93 (WYRVPVLTAWSTPGAALLVTGLQGLTLNEA) the chain is Cytoplasmic. The chain crosses the membrane as a helical span at residues 94–114 (IGVFIVTNALIVLCGITGLFA). Over 115–123 (RLMRIIPHS) the chain is Periplasmic. The chain crosses the membrane as a helical span at residues 124 to 144 (LAAAMLAGILLRFGLQAFASL). Topologically, residues 145 to 167 (DGQFTLCGSMLLVWLATKAVAPR) are cytoplasmic. The helical transmembrane segment at 168 to 188 (YAVIAAMIIGIVIVIAQGDVV) threads the bilayer. The Periplasmic portion of the chain corresponds to 189–200 (TTDVVFKPVLPT). Residues 201–221 (YITPDFSFAHSLSVALPLFLV) traverse the membrane as a helical segment. Over 222–246 (TMASQNAPGIAAMKAAGYSAPVSPL) the chain is Cytoplasmic. Residues 247 to 267 (IVFTGLLALVFSPFGVYSVGI) traverse the membrane as a helical segment. Over 268 to 287 (AAITAAICQSPEAHPDKDQR) the chain is Periplasmic. A helical membrane pass occupies residues 288–308 (WLAAAVAGIFYLLAGLFGSAI). Residues 309-311 (TGM) are Cytoplasmic-facing. The helical transmembrane segment at 312–332 (MAALPVSWIQMLAGLALLSTI) threads the bilayer. Over 333 to 361 (GGSLYQALHNERERDAAVVAFLVTASGLT) the chain is Periplasmic. A helical transmembrane segment spans residues 362–382 (LVGIGSAFWGLIAGGVCYVVL). Residues 383 to 391 (NLIADRNRY) are Cytoplasmic-facing.

The protein resides in the cell inner membrane. In Escherichia coli (strain K12), this protein is Inner membrane protein YdcO (ydcO).